Reading from the N-terminus, the 526-residue chain is GMP synthase [glutamine-hydrolyzing] (526 aa).

The region spanning 4–202 is the Glutamine amidotransferase type-1 domain; it reads KILILDFGSQ…VHDICGCDQS (199 aa). C81 serves as the catalytic Nucleophile. Residues H176 and E178 contribute to the active site. Residues 203–395 form the GMPS ATP-PPase domain; it reads WNMPDYVETA…LGLPHDMVYR (193 aa). ATP is bound at residue 230-236; that stretch reads SGGVDSS.

As to quaternary structure, homodimer.

It catalyses the reaction XMP + L-glutamine + ATP + H2O = GMP + L-glutamate + AMP + diphosphate + 2 H(+). Its pathway is purine metabolism; GMP biosynthesis; GMP from XMP (L-Gln route): step 1/1. In terms of biological role, catalyzes the synthesis of GMP from XMP. The chain is GMP synthase [glutamine-hydrolyzing] from Methylobacillus flagellatus (strain ATCC 51484 / DSM 6875 / VKM B-1610 / KT).